A 253-amino-acid chain; its full sequence is Triosephosphate isomerase (253 aa).

Residue 9–11 (NWK) participates in substrate binding. Catalysis depends on His-96, which acts as the Electrophile. The Proton acceptor role is filled by Glu-169. Residues Gly-175, Ser-215, and 236–237 (GG) contribute to the substrate site.

The protein belongs to the triosephosphate isomerase family. In terms of assembly, homodimer.

The protein localises to the cytoplasm. It carries out the reaction D-glyceraldehyde 3-phosphate = dihydroxyacetone phosphate. It participates in carbohydrate biosynthesis; gluconeogenesis. It functions in the pathway carbohydrate degradation; glycolysis; D-glyceraldehyde 3-phosphate from glycerone phosphate: step 1/1. Involved in the gluconeogenesis. Catalyzes stereospecifically the conversion of dihydroxyacetone phosphate (DHAP) to D-glyceraldehyde-3-phosphate (G3P). This chain is Triosephosphate isomerase, found in Borrelia garinii subsp. bavariensis (strain ATCC BAA-2496 / DSM 23469 / PBi) (Borreliella bavariensis).